Reading from the N-terminus, the 83-residue chain is Mitochondrial import inner membrane translocase subunit Tim8 B (83 aa).

N-acetylalanine is present on alanine 2. A Twin CX3C motif motif is present at residues 36–59 (CWDKCVEKPGSRLDSRTENCLSSC). Intrachain disulfides connect cysteine 36/cysteine 59 and cysteine 40/cysteine 55.

This sequence belongs to the small Tim family. Heterohexamer; possibly composed of 3 copies of TIMM8B and 3 copies of TIMM13, named soluble 70 kDa complex. Associates with the TIM22 complex, whose core is composed of TIMM22.

It is found in the mitochondrion inner membrane. In terms of biological role, probable mitochondrial intermembrane chaperone that participates in the import and insertion of some multi-pass transmembrane proteins into the mitochondrial inner membrane. Also required for the transfer of beta-barrel precursors from the TOM complex to the sorting and assembly machinery (SAM complex) of the outer membrane. Acts as a chaperone-like protein that protects the hydrophobic precursors from aggregation and guide them through the mitochondrial intermembrane space. In Mus musculus (Mouse), this protein is Mitochondrial import inner membrane translocase subunit Tim8 B (Timm8b).